The sequence spans 289 residues: Glucosamine-6-phosphate deaminase 1 (289 aa).

An N6-acetyllysine modification is found at lysine 64. Residue aspartate 72 is the Proton acceptor; for enolization step of the active site. The active-site For ring-opening step is aspartate 141. Histidine 143 (proton acceptor; for ring-opening step) is an active-site residue. Glutamate 148 functions as the For ring-opening step in the catalytic mechanism. Threonine 161 is modified (phosphothreonine).

The protein belongs to the glucosamine/galactosamine-6-phosphate isomerase family. Homohexamer.

Its subcellular location is the cytoplasm. It catalyses the reaction alpha-D-glucosamine 6-phosphate + H2O = beta-D-fructose 6-phosphate + NH4(+). The protein operates within nucleotide-sugar biosynthesis; UDP-N-acetyl-alpha-D-glucosamine biosynthesis; alpha-D-glucosamine 6-phosphate from D-fructose 6-phosphate: step 1/1. With respect to regulation, allosterically activated by N-acetylglucosamine-6-phosphate (GlcNAc6P). Functionally, catalyzes the reversible conversion of alpha-D-glucosamine 6-phosphate (GlcN-6P) into beta-D-fructose 6-phosphate (Fru-6P) and ammonium ion, a regulatory reaction step in de novo uridine diphosphate-N-acetyl-alpha-D-glucosamine (UDP-GlcNAc) biosynthesis via hexosamine pathway. Deamination is coupled to aldo-keto isomerization mediating the metabolic flux from UDP-GlcNAc toward Fru-6P. At high ammonium level can drive amination and isomerization of Fru-6P toward hexosamines and UDP-GlcNAc synthesis. Has a role in fine tuning the metabolic fluctuations of cytosolic UDP-GlcNAc and their effects on hyaluronan synthesis that occur during tissue remodeling. Seems to trigger calcium oscillations in mammalian eggs. These oscillations serve as the essential trigger for egg activation and early development of the embryo. The sequence is that of Glucosamine-6-phosphate deaminase 1 from Homo sapiens (Human).